The following is a 320-amino-acid chain: L-lactate dehydrogenase 1 (320 aa).

NAD(+) contacts are provided by residues V18, D39, R44, Y69, and G83–A84. The substrate site is built by Q86 and R92. NAD(+) is bound by residues S105, A122–N124, and S147. A substrate-binding site is contributed by N124 to D127. D152 to R155 is a substrate binding site. The active-site Proton acceptor is the H179. At Y223 the chain carries Phosphotyrosine. A substrate-binding site is contributed by T232.

Belongs to the LDH/MDH superfamily. LDH family. In terms of assembly, homotetramer.

The protein resides in the cytoplasm. The enzyme catalyses (S)-lactate + NAD(+) = pyruvate + NADH + H(+). Its pathway is fermentation; pyruvate fermentation to lactate; (S)-lactate from pyruvate: step 1/1. Catalyzes the conversion of lactate to pyruvate. The chain is L-lactate dehydrogenase 1 from Lactiplantibacillus plantarum (strain ATCC BAA-793 / NCIMB 8826 / WCFS1) (Lactobacillus plantarum).